The primary structure comprises 93 residues: uncharacterized protein (93 aa).

The segment at 73–93 (KWTVSGPVKQDTGKTDPAEKN) is disordered. Residues 83–93 (DTGKTDPAEKN) are compositionally biased toward basic and acidic residues.

This is an uncharacterized protein from Rhodobacter capsulatus (Rhodopseudomonas capsulata).